We begin with the raw amino-acid sequence, 429 residues long: MRVLVLGSGVIGVTSAYYLARAGHEVTVVDREAGPALDTSFANAGQISPGYASPWAAPGVPLKAIKWMFQQHAPLSIRPDGTLFQLQWMWQMLRNCNAASYAENKERMVRLAEYSRDCIRALRAETGIAYEGRQQGTLQVFRTQQQLDGAANDIAVLERAGVPYELLSRDDLVRSEPGLASTRHKLAGGLRLPNDETGDCQLFTTRLAAMAEKLGVRFRFNSRINSLIVQNDAVRGALVDGEAMTADLVVVAMGSYSTPFLKNLVGVPVYPLKGFSITVPMTDAERSPVSTVLDETYKVAITRFDDRIRVGGMAQIVGYDKRLDPGKRKTLEFVVSDLFPGGGDVSRATFWTGLRPMTPDGTPIVGPTPVRGLWINTGHGTLGWTMACGSGQLLSDLVSGRSPAIRADDLSVYRYLRGGQAPATKPALA.

3–17 (VLVLGSGVIGVTSAY) contributes to the FAD binding site.

Belongs to the DadA oxidoreductase family. It depends on FAD as a cofactor.

The catalysed reaction is a D-alpha-amino acid + A + H2O = a 2-oxocarboxylate + AH2 + NH4(+). Functionally, oxidative deamination of D-amino acids. This is D-amino acid dehydrogenase 1 (dadA1) from Ralstonia nicotianae (strain ATCC BAA-1114 / GMI1000) (Ralstonia solanacearum).